Consider the following 328-residue polypeptide: dTDP-glucose 4,6-dehydratase (328 aa).

NAD(+) is bound by residues 13–14, 37–40, 63–64, 82–86, and T101; these read FI, DALT, DI, and LAAES. S86 lines the substrate pocket. Residue T126 participates in substrate binding. The active-site Proton donor is the D127. Active-site proton acceptor residues include E128 and Y150. Residue 150-154 participates in NAD(+) binding; sequence YSASK. Substrate is bound at residue N179. Position 180 (N180) interacts with NAD(+). Substrate is bound by residues 189 to 190, 205 to 207, R214, N249, and 272 to 276; these read KL, PLY, and DRKGH.

It belongs to the NAD(P)-dependent epimerase/dehydratase family. dTDP-glucose dehydratase subfamily. Homodimer. NAD(+) serves as cofactor.

It catalyses the reaction dTDP-alpha-D-glucose = dTDP-4-dehydro-6-deoxy-alpha-D-glucose + H2O. Its pathway is antibiotic biosynthesis; streptomycin biosynthesis. Functionally, involved in the biosynthesis of the streptose moiety of streptomycin. Catalyzes the dehydration of dTDP-D-glucose to form dTDP-6-deoxy-D-xylo-4-hexulose via a three-step process involving oxidation, dehydration and reduction. In Streptomyces griseus, this protein is dTDP-glucose 4,6-dehydratase.